Here is a 233-residue protein sequence, read N- to C-terminus: MRGVKRVFTWLAKLVLGLFFASILSVVLLRFIDPPMWSWRIERALFPPAPITEVRHQWRSLEQISPELQLAVIAAEDQKFAGHSGFDLDAISSAIEYNQKGKKVRGASTLSQQAAKNLFMWSSRSFIRKGIEAWFTLLMELIWDKARILEVYLNIVEFGPGIYGAEAASKHYFGKSAAKLTRYEASLLAAALPNPWRYKVSPPSSYVEQRSAWIRKQMRQLGEVTLKKVNEAQ.

A helical membrane pass occupies residues 7–27; it reads VFTWLAKLVLGLFFASILSVV.

Belongs to the glycosyltransferase 51 family.

The protein resides in the cell inner membrane. It catalyses the reaction [GlcNAc-(1-&gt;4)-Mur2Ac(oyl-L-Ala-gamma-D-Glu-L-Lys-D-Ala-D-Ala)](n)-di-trans,octa-cis-undecaprenyl diphosphate + beta-D-GlcNAc-(1-&gt;4)-Mur2Ac(oyl-L-Ala-gamma-D-Glu-L-Lys-D-Ala-D-Ala)-di-trans,octa-cis-undecaprenyl diphosphate = [GlcNAc-(1-&gt;4)-Mur2Ac(oyl-L-Ala-gamma-D-Glu-L-Lys-D-Ala-D-Ala)](n+1)-di-trans,octa-cis-undecaprenyl diphosphate + di-trans,octa-cis-undecaprenyl diphosphate + H(+). It functions in the pathway cell wall biogenesis; peptidoglycan biosynthesis. In terms of biological role, peptidoglycan polymerase that catalyzes glycan chain elongation from lipid-linked precursors. The sequence is that of Biosynthetic peptidoglycan transglycosylase from Shewanella oneidensis (strain ATCC 700550 / JCM 31522 / CIP 106686 / LMG 19005 / NCIMB 14063 / MR-1).